Consider the following 304-residue polypeptide: Recombination-associated protein RdgC (304 aa).

This sequence belongs to the RdgC family.

It localises to the cytoplasm. It is found in the nucleoid. May be involved in recombination. In Shewanella sp. (strain W3-18-1), this protein is Recombination-associated protein RdgC.